A 244-amino-acid chain; its full sequence is MDPGAALQRRAGGGGGLGAGSPALSGGQGRRRKQPPRPADFKLQVIIIGSRGVGKTSLMERFTDDTFCEACKSTVGVDFKIKTVELRGKKIRLQIWDTAGQERFNSITSAYYRSAKGIILVYDITKKETFDDLPKWMKMIDKYASEDAELLLVGNKLDCETDREITRQQGEKFAQQITGMRFCEASAKDNFNVDEIFLKLVDDILKKMPLDILRNELSNSILSLQPEPEIPPELPPPRPHVRCC.

Methionine 1 is subject to N-acetylmethionine. Residues 1 to 10 (MDPGAALQRR) show a composition bias toward low complexity. A disordered region spans residues 1-37 (MDPGAALQRRAGGGGGLGAGSPALSGGQGRRRKQPPR). Phosphoserine is present on residues serine 21 and serine 25. Glycine 52 is a GDP binding site. Residues glycine 52, valine 53, glycine 54, lysine 55, and threonine 56 each contribute to the GTP site. 4 residues coordinate GDP: glycine 54, lysine 55, threonine 56, and serine 57. Residue threonine 56 coordinates Mg(2+). Short sequence motifs (switch) lie at residues 65–79 (DTFCEACKSTVGVDF) and 97–114 (DTAGQERFNSITSAYYRS). GTP contacts are provided by serine 73 and threonine 74. Mg(2+) is bound by residues threonine 74 and aspartate 97. Glycine 100 contributes to the GTP binding site. Serine 106 carries the post-translational modification Phosphoserine; by LRRK2. 4 residues coordinate GDP: asparagine 155, lysine 156, aspartate 158, and cysteine 159. GTP-binding residues include asparagine 155, lysine 156, and aspartate 158. Serine 186, alanine 187, and lysine 188 together coordinate GTP. Residues alanine 187 and lysine 188 each contribute to the GDP site. The interval 225–244 (QPEPEIPPELPPPRPHVRCC) is disordered. The span at 228–238 (PEIPPELPPPR) shows a compositional bias: pro residues. Residues cysteine 243 and cysteine 244 are each lipidated (S-geranylgeranyl cysteine).

Belongs to the small GTPase superfamily. Rab family. As to quaternary structure, interacts with RABIF. Interacts with OPTN. Interacts with LRRK2; interaction facilitates phosphorylation of Ser-106. Interacts with GDI1, GDI2, CHM and CHML; these interactions are disrupted by phosphorylation on Ser-106. Interacts with RILPL1 and RILPL2; these interactions are dependent on phosphorylation of Ser-106. Requires Mg(2+) as cofactor. In terms of processing, phosphorylation of Ser-106 in the switch II region by LRRK2 prevents the association of RAB regulatory proteins, including CHM, CHML and RAB GDP dissociation inhibitors GDI1 and GDI2.

The protein localises to the recycling endosome membrane. Its subcellular location is the lysosome membrane. The protein resides in the golgi apparatus membrane. It is found in the cytoplasmic vesicle. It localises to the autophagosome. The enzyme catalyses GTP + H2O = GDP + phosphate + H(+). With respect to regulation, regulated by guanine nucleotide exchange factors (GEFs) including DENND3 which promote the exchange of bound GDP for free GTP. Regulated by GTPase activating proteins (GAPs) which increase the GTP hydrolysis activity. Inhibited by GDP dissociation inhibitors (GDIs). The small GTPases Rab are key regulators of intracellular membrane trafficking, from the formation of transport vesicles to their fusion with membranes. Rabs cycle between an inactive GDP-bound form and an active GTP-bound form that is able to recruit to membranes different sets of downstream effectors directly responsible for vesicle formation, movement, tethering and fusion. RAB12 may play a role in protein transport from recycling endosomes to lysosomes regulating, for instance, the degradation of the transferrin receptor. Involved in autophagy. The protein is Ras-related protein Rab-12 of Homo sapiens (Human).